The sequence spans 289 residues: Alpha-soluble NSF attachment protein (289 aa).

The stretch at G112–E145 is one TPR repeat.

This sequence belongs to the SNAP family.

The protein resides in the membrane. In terms of biological role, required for vesicular transport between the endoplasmic reticulum and the Golgi apparatus. This Vitis vinifera (Grape) protein is Alpha-soluble NSF attachment protein.